The primary structure comprises 74 residues: Anaphase-promoting complex subunit 13 (74 aa).

Residues 33–53 are disordered; that stretch reads LNELPDPEQDNGGTTESVKEQ.

This sequence belongs to the APC13 family. As to quaternary structure, the mammalian APC/C is composed at least of 14 distinct subunits ANAPC1, ANAPC2, CDC27/APC3, ANAPC4, ANAPC5, CDC16/APC6, ANAPC7, CDC23/APC8, ANAPC10, ANAPC11, CDC26/APC12, ANAPC13, ANAPC15 and ANAPC16 that assemble into a complex of at least 19 chains with a combined molecular mass of around 1.2 MDa; APC/C interacts with FZR1 and FBXO5.

The protein localises to the nucleus. It functions in the pathway protein modification; protein ubiquitination. In terms of biological role, component of the anaphase promoting complex/cyclosome (APC/C), a cell cycle-regulated E3 ubiquitin ligase that controls progression through mitosis and the G1 phase of the cell cycle. The APC/C complex acts by mediating ubiquitination and subsequent degradation of target proteins: it mainly mediates the formation of 'Lys-11'-linked polyubiquitin chains and, to a lower extent, the formation of 'Lys-48'- and 'Lys-63'-linked polyubiquitin chains. The APC/C complex catalyzes assembly of branched 'Lys-11'-/'Lys-48'-linked branched ubiquitin chains on target proteins. In Pongo abelii (Sumatran orangutan), this protein is Anaphase-promoting complex subunit 13 (ANAPC13).